The following is a 154-amino-acid chain: Ecotin-like protein 2 (154 aa).

The protein belongs to the protease inhibitor I11 (ecotin) family.

The chain is Ecotin-like protein 2 from Trypanosoma brucei brucei (strain 927/4 GUTat10.1).